We begin with the raw amino-acid sequence, 544 residues long: Putative glycerol-3-phosphate transporter 4 (544 aa).

Helical transmembrane passes span 28-47 (TFRY…YHAS), 121-141 (VAFL…GDSL), 156-176 (FFVG…WFFL), 181-201 (AAGL…GNWF), 218-238 (SVGN…GWGW), and 240-260 (FIAP…FLAA). Residues 281–313 (KRDVEEEEEEVEEDLGTDVEGDGEGSSGSGSGY) are disordered. The segment covering 285-303 (EEEEEEVEEDLGTDVEGDG) has biased composition (acidic residues). 7 helical membrane-spanning segments follow: residues 319–339 (VGLL…CLFF), 342–362 (LVAY…TIGG), 371–391 (GNLS…CGYI), 402–422 (AAAF…YGGV), 428–448 (ILLM…ITTA), 471–491 (AIID…TGFL), and 494–514 (LGWQ…GLLL).

It belongs to the major facilitator superfamily. Organophosphate:Pi antiporter (OPA) (TC 2.A.1.4) family.

The protein localises to the membrane. The protein is Putative glycerol-3-phosphate transporter 4 of Arabidopsis thaliana (Mouse-ear cress).